The sequence spans 374 residues: Probable dual-specificity RNA methyltransferase RlmN (374 aa).

Catalysis depends on Glu108, which acts as the Proton acceptor. Residues 114-361 form the Radical SAM core domain; it reads YSDRNTVCIS…SCTVRDTRGR (248 aa). A disulfide bond links Cys121 and Cys367. Residues Cys128, Cys132, and Cys135 each coordinate [4Fe-4S] cluster. S-adenosyl-L-methionine is bound by residues 188-189, Ser222, 245-247, and Asn324; these read GE and SLH. Cys367 functions as the S-methylcysteine intermediate in the catalytic mechanism.

Belongs to the radical SAM superfamily. RlmN family. Requires [4Fe-4S] cluster as cofactor.

Its subcellular location is the cytoplasm. The enzyme catalyses adenosine(2503) in 23S rRNA + 2 reduced [2Fe-2S]-[ferredoxin] + 2 S-adenosyl-L-methionine = 2-methyladenosine(2503) in 23S rRNA + 5'-deoxyadenosine + L-methionine + 2 oxidized [2Fe-2S]-[ferredoxin] + S-adenosyl-L-homocysteine. It carries out the reaction adenosine(37) in tRNA + 2 reduced [2Fe-2S]-[ferredoxin] + 2 S-adenosyl-L-methionine = 2-methyladenosine(37) in tRNA + 5'-deoxyadenosine + L-methionine + 2 oxidized [2Fe-2S]-[ferredoxin] + S-adenosyl-L-homocysteine. Specifically methylates position 2 of adenine 2503 in 23S rRNA and position 2 of adenine 37 in tRNAs. This chain is Probable dual-specificity RNA methyltransferase RlmN, found in Mycobacterium sp. (strain JLS).